A 113-amino-acid polypeptide reads, in one-letter code: uncharacterized protein (113 aa).

The HTH hxlR-type domain occupies 16–113 (TPFGYTLSLI…CEWGVKNQNN (98 aa)).

This is an uncharacterized protein from Halalkalibacterium halodurans (strain ATCC BAA-125 / DSM 18197 / FERM 7344 / JCM 9153 / C-125) (Bacillus halodurans).